We begin with the raw amino-acid sequence, 755 residues long: SWI/SNF-related matrix-associated actin-dependent regulator of chromatin subfamily A-like protein 1 (755 aa).

Residues 7–27 (SEIAEKKRIALAKLQAKKSQL) adopt a coiled-coil conformation. 2 disordered regions span residues 26–91 (QLLA…NKSS) and 104–134 (SNRE…SLSS). The span at 32–63 (PATNGKSTTSATGATQHANNGKSNPNQPQAKS) shows a compositional bias: polar residues. Residue Ser63 is modified to Phosphoserine. The HARP domain maps to 139–217 (PVAVLLGNSI…KPYVHMNGIP (79 aa)). The Helicase ATP-binding domain occupies 256–412 (CFAIAQKGRI…FTQLQMIDGK (157 aa)). 269-276 (DEMGLGKT) lines the ATP pocket. Residues 361–364 (DESH) carry the DESH box motif. Residues 527 to 681 (YLKTLVKEQK…NLQKATHTAA (155 aa)) enclose the Helicase C-terminal domain.

The protein belongs to the SNF2/RAD54 helicase family. SMARCAL1 subfamily.

It is found in the nucleus. ATP-dependent annealing helicase that catalyzes the rewinding of the stably unwound DNA. This is SWI/SNF-related matrix-associated actin-dependent regulator of chromatin subfamily A-like protein 1 (Marcal1) from Drosophila melanogaster (Fruit fly).